Consider the following 395-residue polypeptide: Protochlorophyllide reductase B, chloroplastic (395 aa).

Residues 1–59 constitute a chloroplast transit peptide; that stretch reads MALQAATSFLPSALSARKEGAAKDSAFFGVRLADGLKLDATSLGLRTKRVNTSSVAIRA.

The protein belongs to the short-chain dehydrogenases/reductases (SDR) family. POR subfamily.

It is found in the plastid. It localises to the chloroplast. The enzyme catalyses chlorophyllide a + NADP(+) = protochlorophyllide a + NADPH + H(+). Its pathway is porphyrin-containing compound metabolism; chlorophyll biosynthesis. Functionally, phototransformation of protochlorophyllide (Pchlide) to chlorophyllide (Chlide). This chain is Protochlorophyllide reductase B, chloroplastic (PORB), found in Hordeum vulgare (Barley).